The following is a 452-amino-acid chain: MKETTSFSQKLKQFVLLFFPIFVTQMSLFAMSFFDTTMSGHASPTDLSGVAIGTSIWIPVSTGLTGILMATTPIVAQLVGSKKKEDVPHVVIQAVYLAICASFVVILIGFFVVSPILNGMRLEEPVERIAAQFLSIIAIGIIPLFTYTVLRGFIDALGKTRTTMIITLLSLPINVILNYLLIFGNFGFPKLGGVGAAIASTATYWCILIITVIIIQTKEPFASFNIFKQLYRPSLSSWIAFLKLGVPIGFAIFFETSIFAAVTLMMSNFSTTTIAAHQAAMNFASLLYMTPLSLAMAMTIAVGFEVGAKRYDNAKQYGLIGIGLALAFALLYSILLYFFDDQIASIYTTDAKVHHLAKEFLIFAILFQISDAIATPVQGALRGYKDVNVALIMTLIAYWIIGLPLGYILATYTEWAAKGYWIGLIIGLAFGAAFLLIRLFQVQRKYTTQNSR.

12 helical membrane-spanning segments follow: residues Q13–F34, G49–T71, I92–S114, I129–R151, M164–F183, G193–I215, A240–V262, N282–F304, Y317–F339, E359–L381, N388–A410, and Y420–V442.

The protein belongs to the multi antimicrobial extrusion (MATE) (TC 2.A.66.1) family.

Its subcellular location is the cell membrane. Its function is as follows. Multidrug efflux pump. In Bacillus cereus (strain ATCC 14579 / DSM 31 / CCUG 7414 / JCM 2152 / NBRC 15305 / NCIMB 9373 / NCTC 2599 / NRRL B-3711), this protein is Probable multidrug resistance protein NorM (norM).